Consider the following 163-residue polypeptide: Oocyte-secreted protein 1 (163 aa).

Positions 1–21 are cleaved as a signal peptide; that stretch reads MKPSSGLRGLLVLFSLTWTCA.

Belongs to the PLAC1 family. In terms of tissue distribution, oocyte-specific.

It localises to the secreted. Functionally, may be involved in cell differentiation. This Bos taurus (Bovine) protein is Oocyte-secreted protein 1 (OOSP1).